The primary structure comprises 295 residues: 4-diphosphocytidyl-2-C-methyl-D-erythritol kinase (295 aa).

Lys18 is an active-site residue. Position 101-111 (Pro101–Ser111) interacts with ATP. Asp143 is a catalytic residue.

This sequence belongs to the GHMP kinase family. IspE subfamily.

It catalyses the reaction 4-CDP-2-C-methyl-D-erythritol + ATP = 4-CDP-2-C-methyl-D-erythritol 2-phosphate + ADP + H(+). It functions in the pathway isoprenoid biosynthesis; isopentenyl diphosphate biosynthesis via DXP pathway; isopentenyl diphosphate from 1-deoxy-D-xylulose 5-phosphate: step 3/6. Its function is as follows. Catalyzes the phosphorylation of the position 2 hydroxy group of 4-diphosphocytidyl-2C-methyl-D-erythritol. This is 4-diphosphocytidyl-2-C-methyl-D-erythritol kinase from Vibrio vulnificus (strain YJ016).